The following is a 171-amino-acid chain: UPF0398 protein MGAS9429_Spy1349 (171 aa).

This sequence belongs to the UPF0398 family.

This Streptococcus pyogenes serotype M12 (strain MGAS9429) protein is UPF0398 protein MGAS9429_Spy1349.